Reading from the N-terminus, the 940-residue chain is Lon protease homolog 1, mitochondrial (940 aa).

The transit peptide at 1–61 (MLKLFTSSAS…AFFCSEPTNG (61 aa)) directs the protein to the mitochondrion. A disordered region spans residues 70–90 (KAVESDSEVSDSKSSSAIVPT). S74 bears the Phosphoserine mark. The region spanning 100 to 309 (VLALPVPHRP…LTLELMKKEM (210 aa)) is the Lon N-terminal domain. Residue 464-471 (GPPGVGKT) participates in ATP binding. Residues 751 to 935 (QTPVGVVMGL…GKIFELAFGY (185 aa)) form the Lon proteolytic domain. Active-site residues include S841 and K884.

This sequence belongs to the peptidase S16 family. Homohexamer or homoheptamer. Organized in a ring with a central cavity.

The protein localises to the mitochondrion matrix. The catalysed reaction is Hydrolysis of proteins in presence of ATP.. In terms of biological role, ATP-dependent serine protease that mediates the selective degradation of misfolded, unassembled or oxidatively damaged polypeptides as well as certain short-lived regulatory proteins in the mitochondrial matrix. May also have a chaperone function in the assembly of inner membrane protein complexes. Participates in the regulation of mitochondrial gene expression and in the maintenance of the integrity of the mitochondrial genome. Binds to mitochondrial DNA in a site-specific manner. In Arabidopsis thaliana (Mouse-ear cress), this protein is Lon protease homolog 1, mitochondrial (LON1).